Reading from the N-terminus, the 55-residue chain is Large ribosomal subunit protein bL33 (55 aa).

It belongs to the bacterial ribosomal protein bL33 family.

The protein is Large ribosomal subunit protein bL33 of Edwardsiella ictaluri (strain 93-146).